We begin with the raw amino-acid sequence, 140 residues long: uncharacterized protein (140 aa).

2 helical membrane-spanning segments follow: residues 4 to 21 (ILKF…YLFG) and 26 to 48 (LVKV…SGYL).

This sequence belongs to the bacteriophage holin family. Cp-1 holin subfamily.

It localises to the cell membrane. This is an uncharacterized protein from Listeria monocytogenes serovar 1/2a (strain ATCC BAA-679 / EGD-e).